We begin with the raw amino-acid sequence, 629 residues long: Embryonic polyadenylate-binding protein B (629 aa).

RRM domains follow at residues 11 to 89 (ASLY…WSQR), 99 to 175 (GNVF…HFKS), 191 to 268 (TNVY…RAQK), and 294 to 370 (VNLY…LAQR). The PABC domain occupies 539-616 (QEPLTASLLA…AVAVLQAHQA (78 aa)).

This sequence belongs to the polyadenylate-binding protein type-1 family. In terms of assembly, interacts with dazl in an RNA-independent manner. The C-terminus can self-associate and also interact with the C-terminus of pabpc1, independently of RNA. RRM 1 and RRM 2 interact with both eif4g1 and paip1, and the C-terminus also interacts with paip1. Prior to oocyte maturation, found in a complex with dazl and pum2 proteins and spdy1 mRNA; pum2 dissociates from the complex during maturation. Interacts with the translation termination factor sup35/erf3.

It is found in the cytoplasm. Its function is as follows. Binds and protects the poly(A) tail of mRNA with or without an AU-rich element (ARE) and prevents mRNA deadenylation. Stimulates the translation of mRNAs to which it is bound during early development. The protein is Embryonic polyadenylate-binding protein B (epabp-b) of Xenopus laevis (African clawed frog).